The chain runs to 456 residues: MFS-type transporter ppzB (456 aa).

5 consecutive transmembrane segments (helical) span residues 1–21 (MGLF…PFIM), 38–58 (GFLA…GWAA), 72–92 (VFLF…LLVV), 125–145 (IGTI…LGGV), and 154–174 (AVFA…GLVI). Residues 206–225 (EAQERTHEGTPLLPQDDDDD) form a disordered region. The next 6 helical transmembrane spans lie at 255 to 275 (LAML…ATVP), 284 to 304 (FSSL…FALG), 318 to 338 (AAAT…GLPE), 348 to 368 (VALF…VTSP), 398 to 418 (FGFS…LGGV), and 427 to 447 (VMGA…FLFV).

It belongs to the major facilitator superfamily. TCR/Tet family.

The protein localises to the membrane. MFS-type transporter; part of the gene cluster that mediates the biosynthesis of pyrrolopyrazines, secondary metabolites showing insecticidal activity. Probably involved in the secretion of peramine and other pyrrolopyrazines. This is MFS-type transporter ppzB (ppzB) from Metarhizium majus (strain ARSEF 297).